The primary structure comprises 156 residues: Small ribosomal subunit protein uS7 (156 aa).

Belongs to the universal ribosomal protein uS7 family. As to quaternary structure, part of the 30S ribosomal subunit. Contacts proteins S9 and S11.

In terms of biological role, one of the primary rRNA binding proteins, it binds directly to 16S rRNA where it nucleates assembly of the head domain of the 30S subunit. Is located at the subunit interface close to the decoding center, probably blocks exit of the E-site tRNA. This is Small ribosomal subunit protein uS7 from Brucella abortus (strain S19).